Here is a 38-residue protein sequence, read N- to C-terminus: Cytochrome b6-f complex subunit 5 (38 aa).

The helical transmembrane segment at 5 to 25 threads the bilayer; that stretch reads LVLGIVLGLIPITLAGLFVAA.

The protein belongs to the PetG family. The 4 large subunits of the cytochrome b6-f complex are cytochrome b6, subunit IV (17 kDa polypeptide, PetD), cytochrome f and the Rieske protein, while the 4 small subunits are PetG, PetL, PetM and PetN. The complex functions as a dimer.

Its subcellular location is the cellular thylakoid membrane. Functionally, component of the cytochrome b6-f complex, which mediates electron transfer between photosystem II (PSII) and photosystem I (PSI), cyclic electron flow around PSI, and state transitions. PetG is required for either the stability or assembly of the cytochrome b6-f complex. The chain is Cytochrome b6-f complex subunit 5 from Microcystis aeruginosa (strain NIES-843 / IAM M-2473).